The sequence spans 291 residues: 3-hydroxy-5-phosphonooxypentane-2,4-dione thiolase (291 aa).

Residue K203 is the Schiff-base intermediate with substrate of the active site.

This sequence belongs to the DeoC/FbaB aldolase family. Homodecamer.

The protein localises to the cytoplasm. It catalyses the reaction dihydroxyacetone phosphate + acetyl-CoA = 3-hydroxy-2,4-dioxopentyl phosphate + CoA. Functionally, involved in the degradation of phospho-AI-2, thereby terminating induction of the lsr operon and closing the AI-2 signaling cycle. Catalyzes the transfer of an acetyl moiety from 3-hydroxy-5-phosphonooxypentane-2,4-dione to CoA to form glycerone phosphate and acetyl-CoA. The chain is 3-hydroxy-5-phosphonooxypentane-2,4-dione thiolase from Yersinia pestis bv. Antiqua (strain Antiqua).